A 341-amino-acid chain; its full sequence is Methionine import ATP-binding protein MetN 1 (341 aa).

The ABC transporter domain maps to 2-241; it reads IEFRQVSKSF…PKTTIAQNFV (240 aa). Position 38–45 (38–45) interacts with ATP; it reads GYSGAGKS.

It belongs to the ABC transporter superfamily. Methionine importer (TC 3.A.1.24) family. The complex is composed of two ATP-binding proteins (MetN), two transmembrane proteins (MetI) and a solute-binding protein (MetQ).

It localises to the cell membrane. The catalysed reaction is L-methionine(out) + ATP + H2O = L-methionine(in) + ADP + phosphate + H(+). The enzyme catalyses D-methionine(out) + ATP + H2O = D-methionine(in) + ADP + phosphate + H(+). In terms of biological role, part of the ABC transporter complex MetNIQ involved in methionine import. Responsible for energy coupling to the transport system. This chain is Methionine import ATP-binding protein MetN 1, found in Staphylococcus aureus (strain MRSA252).